The following is a 232-amino-acid chain: MAGVRSLRCSRGCAGGCECGDKGKCRDSSLLGKRLSEDSSRHQLLQKWASMWSSMSEDASVADMERARLEEAAAAEERPLVFLCSGCRRPLGDSLSWVASQEDTNCILLRCVSCNVSVDKEQKLSKREKENGCVLETLCCAGCSLNLGYVYRCTPKNLDYKRDLFCLSVEAIESYVLGSSEKQIVSEDKELFNLESRVEIEKSLTQMEDVLKALQMKLWEAESKLSFATCKS.

Phosphoserine is present on residues Ser-36, Ser-39, and Ser-40. Positions 79–177 constitute a Mis18 domain; sequence PLVFLCSGCR…SVEAIESYVL (99 aa). Residues Cys-84, Cys-87, Cys-140, and Cys-143 each coordinate Zn(2+). Lys-161 participates in a covalent cross-link: Glycyl lysine isopeptide (Lys-Gly) (interchain with G-Cter in SUMO2). Ser-232 carries the phosphoserine modification.

Belongs to the mis18 family. In terms of assembly, homodimer, and heterodimer with OIP5/MIS18B. Identified in a complex containing MIS18A, OIP5/MIS18B, MIS18BP1, RBBP7 and RBBP4.

The protein resides in the nucleus. The protein localises to the chromosome. Its subcellular location is the centromere. Its function is as follows. Required for recruitment of CENPA to centromeres and normal chromosome segregation during mitosis. This chain is Protein Mis18-alpha (MIS18A), found in Pan troglodytes (Chimpanzee).